A 1889-amino-acid chain; its full sequence is MAAAAAAAAVGDPQPPQPEAPAQGLALDKAATAAHLKAALSRPDNRAGAEELQALLERVLNAERPLAGAAGGEEAAGGGGGGPGEAEEDALEWCKCLLAGGGGYEEFCAAVRAYDPAALCGLVWTANFVAYRCRTCGISPCMSLCAECFHQGDHTGHDFNMFRSQAGGACDCGDSNVMRESGFCRRHQIKSSSNIPCVPKDLLMMSEFVLPRFIFCLIQYLREGYNEPAADAPSEKDLNKVLQLLEPQISFLEDLTKMGGAMRSVLTQVLTNQQNYKDLTAGLGENACAKKSHEKYLIALKSSGLTYPEDKLVYGVQEPAAGTSTLAAQGFAGATGTLGQIDSSDEEDQDGSQGLGKRKRVKLSSGTKDQSIMDVLKHKSFLEELLFWTIKYEFPQKMVTFLLNMLPDQEYKVAFTKTFVQHYAFIMKTLKKSHESDTMSNRIVHISVQLFSNEELARQVTEECQLLDIMVTVLLYMMESCLIKSELQDEENSLHVVVNCGEALLKNNTYWPLVSDFINILSHQSVAQRFLEDHGLLVTWMNFVSFFQGMNLNKRELNEHVEFESQTYYAAFAAELEACAQPMWGLLSHCKVRETQEYTRNVVRYCLEALQDWFDAINFVDEPAPNQVTFHLPLHRYYAMFLSKAVKCQELDLDSLLPDQEMLMKLMIHPLQIQASLAEIHSNMWVRNGLQIKGQAMTYVQSHFCNSMIDPDIYLLQVCASRLDPDYFISSVFERFKVVDLLTMASQHHNMVLDVEHERSMLEGALTFLVILLSLRLHLGMSDDDILRAEMVAQLCMNDRTHSSLLDLIPENPNPKSGIIPGSYSFESVLSAVADFRAPIFEPGGSMQQGMYTPKAEVWDQEFDPVMVILRTVYRRDVQSAMDRYTAFLKQSGKFPGNPWPPYKKRTSLHPSYKGLMRLLHCKTLHIVLFTLLYKILMDHQNLSEHVLCMVLYLIELGLENSADDDSEEEVSMGGPERCHDSWFPGSNLVSNMRHFINYVRVRVPETAPELKRDPLASTSSDALDSLQNSGTAQVFSLVAERRKKFQEIINRSNSEANQVVRPKIPSKWSAPGSSPQLTTAILEIKESILSLLIKLHHKLSGKQNSYYPPWLDDIEVLIQPEIPKYNHGDGITAVERILLKAAVQSRMNKRIIEEICRKVTPPVPPKKITAAEKKTLDKEERRQKARERQQKLLAEFASRQKSFMETAMDVDSPENDIPMEITTAEPQVSEAVYDCVICGQSGPSSEDRPTGLVVLLQASSVLGQCRDNAEPKKLPIAEEEQIYPWDTCAAVHDVRLSLLQRYFKDSSCLLAVSIGWEGGVYVQTCGHTLHIDCHKSYMESLRNDQVLQGFSVDKGEFTCPLCRQFANSVLPCYPGSNVENNLWQRPCNKSTQDLIKEVEELQGRPGAFPSETNLSKEMESVMKDIKNTTQKKYRDYSKTPGSPDNEFLFMYSVARTNLELELIHRGGSLCSGGPSTAGKRSCLNQLFHVLALHMRLYTIDSEYNPWKKLTQLVEDMNSQVGNEDQQPEVPILYHDVTSLLLIQILMMPQPLRKEHFTCIVKVLFTLLYTQALAALSVKGTEEDRSAWKHAGALRKDTCDAEKCYEVLLSFVISELSKGKLYYEEGAQECAMVSPIAWSPESMERYIQDFCLPFLRVSSLLQHHLFGEDLPSCQEEEEFSVLASCLGLLPTFYQTDHPFISASCLDWPVAAFDIITQWCFEITSFTERHAEQGKALLIQESRWKLPHLLQLPENYNTIFQYYHRKTCSVCTKVPKDPAVCLVCGTFVCLKGLCCKQQSYCECVLHSQNCGAGTGIFLLINASVIIIIRGHRFCLWGSVYLDAHGEEDRDLRRGKPLYICEERYRVLEQQWVSHTFDHINKRWGPHYNGL.

A disordered region spans residues 1–27 (MAAAAAAAAVGDPQPPQPEAPAQGLAL). Residues 118 to 189 (ALCGLVWTAN…ESGFCRRHQI (72 aa)) form a UBR-type zinc finger. The tract at residues 338-362 (LGQIDSSDEEDQDGSQGLGKRKRVK) is disordered. A phosphoserine mark is found at S343 and S344. Helical transmembrane passes span 761 to 781 (MLEG…HLGM) and 919 to 939 (LLHC…ILMD). Positions 1167–1199 (KKITAAEKKTLDKEERRQKARERQQKLLAEFAS) form a coiled coil. Position 1199 is a phosphoserine (S1199). Residues 1306–1364 (DSSCLLAVSIGWEGGVYVQTCGHTLHIDCHKSYMESLRNDQVLQGFSVDKGEFTCPLCR) form an RING-type; degenerate zinc finger. The helical transmembrane segment at 1807-1827 (QNCGAGTGIFLLINASVIIII) threads the bilayer.

It belongs to the E3 ubiquitin-protein ligase UBR1-like family. As to quaternary structure, interacts with UBE2A and UBE2B. Expressed in numerous cells of the smell, touch, vision, hearing and taste senses. Expressed in cells of the olfactory pathway, including the olfactory cell layer of the main olfactory epithelium (MOE), a mitral neuron cell layer of the olfactory bulb (OB), and a pyramidal cell layer of the piriform cortex of the olfactory cortex (OC). Expressed in the vomeronasal sensory epithelium of the vomeronasal organ (VNO) and the mitral cells of the accessory olfactory bulb. Expressed in tactile tissues, including the dorsal root ganglion, trigeminal ganglion and follicle-sinus complexes. Expressed in cells between hair follicle and sinus and also in the region of the rete ridge collar. Expressed in taste buds of the fungiform, circumvallate, and foliate papillae. Expressed in the spiral ganglion, the organ of Corti of the cochlea in the inner ear, in the sensory epithelium of macula and vestibular ganglion of the balancing system (at protein level). Expressed in the liver and skeletal muscle.

The protein localises to the membrane. The catalysed reaction is S-ubiquitinyl-[E2 ubiquitin-conjugating enzyme]-L-cysteine + [acceptor protein]-L-lysine = [E2 ubiquitin-conjugating enzyme]-L-cysteine + N(6)-ubiquitinyl-[acceptor protein]-L-lysine.. The protein operates within protein modification; protein ubiquitination. Its function is as follows. E3 ubiquitin-protein ligase which is a component of the N-end rule pathway. Does not bind to proteins bearing specific N-terminal residues that are destabilizing according to the N-end rule, leading to their ubiquitination and subsequent degradation. May play a role in Shh signaling by mediating the ubiquitination of Kif7. May be important for MYH9 function in certain tissues, possibly by regulating the ubiquitination of MYH9 and consequently affecting its interaction with MYO7A. This is E3 ubiquitin-protein ligase UBR3 (Ubr3) from Mus musculus (Mouse).